The chain runs to 203 residues: Pyridoxal 5'-phosphate synthase subunit PdxT (203 aa).

52 to 54 lines the L-glutamine pocket; it reads GES. Residue Cys84 is the Nucleophile of the active site. L-glutamine contacts are provided by residues Arg116 and 144–145; that span reads IR. Residues His184 and Glu186 each act as charge relay system in the active site.

It belongs to the glutaminase PdxT/SNO family. In terms of assembly, in the presence of PdxS, forms a dodecamer of heterodimers. Only shows activity in the heterodimer.

The catalysed reaction is aldehydo-D-ribose 5-phosphate + D-glyceraldehyde 3-phosphate + L-glutamine = pyridoxal 5'-phosphate + L-glutamate + phosphate + 3 H2O + H(+). The enzyme catalyses L-glutamine + H2O = L-glutamate + NH4(+). The protein operates within cofactor biosynthesis; pyridoxal 5'-phosphate biosynthesis. Its function is as follows. Catalyzes the hydrolysis of glutamine to glutamate and ammonia as part of the biosynthesis of pyridoxal 5'-phosphate. The resulting ammonia molecule is channeled to the active site of PdxS. In Aeropyrum pernix (strain ATCC 700893 / DSM 11879 / JCM 9820 / NBRC 100138 / K1), this protein is Pyridoxal 5'-phosphate synthase subunit PdxT.